The chain runs to 994 residues: Chloride channel protein E (994 aa).

Positions 1–33 (MTRKENEESESLSSSSSPIDNSNNNNNNNNHSI) are disordered. The Cytoplasmic portion of the chain corresponds to 1-163 (MTRKENEESE…HWLGKERIST (163 aa)). Low complexity predominate over residues 11–32 (SLSSSSSPIDNSNNNNNNNNHS). Transmembrane regions (helical) follow at residues 164-184 (LLFI…CDFL), 227-247 (IVFV…ISFI), 271-291 (VLGF…SAAG), 300-320 (FMHA…FGAI), 334-354 (ALTS…LFAI), 362-382 (VMGN…IFFL), 410-430 (LITF…FVFI), 449-469 (IILV…AGPL), 505-525 (LLVF…LPIP), 527-547 (GAIT…GEIL), and 554-574 (QAIE…SGTI). The region spanning 644–705 (MKKNINYLSM…LDIHIENIEQ (62 aa)) is the CBS 1 domain. Disordered regions lie at residues 715-767 (FVNN…NSEN), 802-822 (IKPN…SDFE), and 846-872 (DENS…GDGI). 2 stretches are compositionally biased toward low complexity: residues 717-764 (NNNN…NSNN) and 809-822 (SSSN…SDFE). The segment covering 859-870 (HDDEDDDEEEGD) has biased composition (acidic residues). Residues 944 to 994 (MDLAPSQVPDLTPLNKVFHLFTMLGLGFTYVTSLGKLVGVITKNSLMEQDL) enclose the CBS 2 domain.

Belongs to the chloride channel (TC 2.A.49) family.

Its subcellular location is the membrane. Its function is as follows. Voltage-gated chloride channel. Chloride channels may have several functions including the regulation of cell volume, membrane potential stabilization and signal transduction. This chain is Chloride channel protein E (clcE), found in Dictyostelium discoideum (Social amoeba).